We begin with the raw amino-acid sequence, 115 residues long: uncharacterized protein (115 aa).

This is an uncharacterized protein from Saccharomyces cerevisiae (strain ATCC 204508 / S288c) (Baker's yeast).